The primary structure comprises 244 residues: 6-carboxyhexanoate--CoA ligase (244 aa).

This sequence belongs to the BioW family. In terms of assembly, homodimer. Requires Mg(2+) as cofactor.

The enzyme catalyses heptanedioate + ATP + CoA = 6-carboxyhexanoyl-CoA + AMP + diphosphate. Its pathway is metabolic intermediate metabolism; pimeloyl-CoA biosynthesis; pimeloyl-CoA from pimelate: step 1/1. Its function is as follows. Catalyzes the transformation of pimelate into pimeloyl-CoA with concomitant hydrolysis of ATP to AMP. This is 6-carboxyhexanoate--CoA ligase from Hydrogenobacter thermophilus (strain DSM 6534 / IAM 12695 / TK-6).